The chain runs to 333 residues: Casein kinase II subunit beta-1 (333 aa).

Acidic residues predominate over residues 58–78 (VEPEDDDDEEEEDEEDEEDMS). Disordered stretches follow at residues 58 to 92 (VEPE…ERRH) and 282 to 333 (ARRY…ESEL). Basic residues predominate over residues 305–316 (ASRRRGPPRRQK).

It belongs to the casein kinase 2 subunit beta family. Tetramer composed of two alpha chains, one beta chain and one beta' chain. In terms of processing, phosphorylated by alpha subunit.

Regulatory subunit of casein kinase II/CK2. As part of the kinase complex regulates the basal catalytic activity of the alpha subunit a constitutively active serine/threonine-protein kinase that phosphorylates a large number of substrates containing acidic residues C-terminal to the phosphorylated serine or threonine. In Neurospora crassa (strain ATCC 24698 / 74-OR23-1A / CBS 708.71 / DSM 1257 / FGSC 987), this protein is Casein kinase II subunit beta-1 (ckb-1).